A 328-amino-acid chain; its full sequence is Lytic polysaccharide monooxygenase aasB (328 aa).

The signal sequence occupies residues Met1 to Gly18. His19 contacts Cu(2+). Cysteines 40 and 43 form a disulfide. Residue Asn54 is glycosylated (N-linked (GlcNAc...) asparagine). 6 cysteine pairs are disulfide-bonded: Cys66–Cys245, Cys102–Cys203, Cys118–Cys145, Cys153–Cys161, Cys167–Cys173, and Cys181–Cys192. His109 provides a ligand contact to Cu(2+). Tyr242 provides a ligand contact to Cu(2+). Asn306 carries N-linked (GlcNAc...) asparagine glycosylation.

Belongs to the polysaccharide monooxygenase AA13 family. Cu(2+) serves as cofactor.

The protein resides in the secreted. The catalysed reaction is starch + reduced acceptor + O2 = D-glucono-1,5-lactone-terminated malto-oligosaccharides + short-chain malto-oligosaccharides + acceptor + H2O.. In terms of biological role, lytic polysaccharide monooxygenase involved in breakdown of granular resistant starch. In Emericella nidulans (strain FGSC A4 / ATCC 38163 / CBS 112.46 / NRRL 194 / M139) (Aspergillus nidulans), this protein is Lytic polysaccharide monooxygenase aasB.